Consider the following 495-residue polypeptide: Leucine aminopeptidase 2 (495 aa).

Positions 1–21 are cleaved as a signal peptide; sequence MKTQLLSLGVALTAISQGVIA. Residues 124-218 enclose the PA domain; the sequence is PPADKITAEL…ADGKNLASLV (95 aa). Residues asparagine 142 and asparagine 235 are each glycosylated (N-linked (GlcNAc...) asparagine). The Zn(2+) site is built by histidine 259 and aspartate 271. Asparagine 272 carries an N-linked (GlcNAc...) asparagine glycan. Catalysis depends on glutamate 303, which acts as the Proton acceptor. Residues glutamate 304 and aspartate 332 each coordinate Zn(2+). An N-linked (GlcNAc...) asparagine glycan is attached at asparagine 352. Residue histidine 430 coordinates Zn(2+). A disordered region spans residues 464-495; it reads GFPTRPKTGKRDVSPRGQSMPGGGCGHHSVFM.

Belongs to the peptidase M28 family. M28A subfamily. In terms of assembly, monomer. Requires Zn(2+) as cofactor.

It is found in the secreted. Its function is as follows. Extracellular aminopeptidase that releases a wide variety of amino acids from natural peptides and contributes to pathogenicity. This Arthroderma otae (strain ATCC MYA-4605 / CBS 113480) (Microsporum canis) protein is Leucine aminopeptidase 2 (LAP2).